Here is a 130-residue protein sequence, read N- to C-terminus: Small ribosomal subunit protein uS9 (130 aa).

The protein belongs to the universal ribosomal protein uS9 family.

The polypeptide is Small ribosomal subunit protein uS9 (Ectopseudomonas mendocina (strain ymp) (Pseudomonas mendocina)).